The sequence spans 184 residues: ATP synthase subunit delta (184 aa).

The protein belongs to the ATPase delta chain family. F-type ATPases have 2 components, F(1) - the catalytic core - and F(0) - the membrane proton channel. F(1) has five subunits: alpha(3), beta(3), gamma(1), delta(1), epsilon(1). F(0) has three main subunits: a(1), b(2) and c(10-14). The alpha and beta chains form an alternating ring which encloses part of the gamma chain. F(1) is attached to F(0) by a central stalk formed by the gamma and epsilon chains, while a peripheral stalk is formed by the delta and b chains.

It is found in the cell inner membrane. In terms of biological role, f(1)F(0) ATP synthase produces ATP from ADP in the presence of a proton or sodium gradient. F-type ATPases consist of two structural domains, F(1) containing the extramembraneous catalytic core and F(0) containing the membrane proton channel, linked together by a central stalk and a peripheral stalk. During catalysis, ATP synthesis in the catalytic domain of F(1) is coupled via a rotary mechanism of the central stalk subunits to proton translocation. Functionally, this protein is part of the stalk that links CF(0) to CF(1). It either transmits conformational changes from CF(0) to CF(1) or is implicated in proton conduction. This Rickettsia rickettsii (strain Iowa) protein is ATP synthase subunit delta.